The following is a 159-amino-acid chain: ATP synthase subunit b 2 (159 aa).

A helical membrane pass occupies residues 1 to 21 (MDATFWALIGLIIFLAILAYL).

It belongs to the ATPase B chain family. As to quaternary structure, F-type ATPases have 2 components, F(1) - the catalytic core - and F(0) - the membrane proton channel. F(1) has five subunits: alpha(3), beta(3), gamma(1), delta(1), epsilon(1). F(0) has three main subunits: a(1), b(2) and c(10-14). The alpha and beta chains form an alternating ring which encloses part of the gamma chain. F(1) is attached to F(0) by a central stalk formed by the gamma and epsilon chains, while a peripheral stalk is formed by the delta and b chains.

It localises to the cell inner membrane. In terms of biological role, f(1)F(0) ATP synthase produces ATP from ADP in the presence of a proton or sodium gradient. F-type ATPases consist of two structural domains, F(1) containing the extramembraneous catalytic core and F(0) containing the membrane proton channel, linked together by a central stalk and a peripheral stalk. During catalysis, ATP synthesis in the catalytic domain of F(1) is coupled via a rotary mechanism of the central stalk subunits to proton translocation. Functionally, component of the F(0) channel, it forms part of the peripheral stalk, linking F(1) to F(0). This is ATP synthase subunit b 2 from Brucella anthropi (strain ATCC 49188 / DSM 6882 / CCUG 24695 / JCM 21032 / LMG 3331 / NBRC 15819 / NCTC 12168 / Alc 37) (Ochrobactrum anthropi).